Here is a 129-residue protein sequence, read N- to C-terminus: Glycine cleavage system H protein (129 aa).

Residues 24–106 (LLKIGVSEFA…IGEGWLVILK (83 aa)) form the Lipoyl-binding domain. The residue at position 65 (K65) is an N6-lipoyllysine.

This sequence belongs to the GcvH family. As to quaternary structure, the glycine cleavage system is composed of four proteins: P, T, L and H. Requires (R)-lipoate as cofactor.

In terms of biological role, the glycine cleavage system catalyzes the degradation of glycine. The H protein shuttles the methylamine group of glycine from the P protein to the T protein. This chain is Glycine cleavage system H protein, found in Prochlorococcus marinus (strain AS9601).